A 105-amino-acid polypeptide reads, in one-letter code: Transmembrane protein 273 (105 aa).

Residues 1 to 19 (MNLGVSMLRILFLLDVGGA) form the signal peptide. At 20–38 (QVLATGKTPGAEIDFKYAL) the chain is on the extracellular side. The helical transmembrane segment at 39 to 59 (IGTAVGVAISAGFLALKICMI) threads the bilayer. Residues 60-105 (RRHLFDDDSSDLKSTPGGLSDTIPLKKRAPRRNHNFSKRDAQVIEL) are Cytoplasmic-facing.

The protein resides in the membrane. The polypeptide is Transmembrane protein 273 (Homo sapiens (Human)).